The following is a 211-amino-acid chain: Suppressor of RNA silencing p3 (211 aa).

Belongs to the tenuiviruses p3 protein family. Homodimer.

The protein resides in the host cytoplasm. In terms of biological role, acts as a suppressor of RNA-mediated gene silencing, also known as post-transcriptional gene silencing (PTGS), presumably through the binding of dsRNA. In Avena sativa (Oat), this protein is Suppressor of RNA silencing p3.